The primary structure comprises 374 residues: MEEFDYYEILEIERSASGEEIKKAYRKMAMKYHPDRNEGSSEAEEMFKRVNEAYQVLSDEGKRQLYDRYGKQGLESQGYSGFSGRGFEDVFDDLGSIFDSVFGGGFSSSSRKRSGPKYNLDLAMELDLSFKEAIFGCKKEIKIRYKDACPDCKGTGAKEGKIETCPDCGGRGQVFIRQGFMTFAQTCPKCGGSGERIKEKCPKCNGKGHENKEENLEVSIPEGVDTDNRIRVSRKGHVGKNGERGDLYLVVRVEEDEHFMRHGNDIYLHVPLFFSTVPLGTTLKIPSLRGELELKIPPNTKDKEQFVFKNEGVKDVHSAKKGNLIAQVKIVYPAKINDEQRELLEKLSRSFGVEGTPHEKGFEGVFEKIKGWFS.

The J domain maps to 5-70 (DYYEILEIER…GKRQLYDRYG (66 aa)). The segment at 136 to 213 (GCKKEIKIRY…CNGKGHENKE (78 aa)) adopts a CR-type zinc-finger fold. The Zn(2+) site is built by Cys-149, Cys-152, Cys-165, Cys-168, Cys-187, Cys-190, Cys-201, and Cys-204. CXXCXGXG motif repeat units lie at residues 149–156 (CPDCKGTG), 165–172 (CPDCGGRG), 187–194 (CPKCGGSG), and 201–208 (CPKCNGKG).

Belongs to the DnaJ family. In terms of assembly, homodimer. Requires Zn(2+) as cofactor.

Its subcellular location is the cytoplasm. Its function is as follows. Participates actively in the response to hyperosmotic and heat shock by preventing the aggregation of stress-denatured proteins and by disaggregating proteins, also in an autonomous, DnaK-independent fashion. Unfolded proteins bind initially to DnaJ; upon interaction with the DnaJ-bound protein, DnaK hydrolyzes its bound ATP, resulting in the formation of a stable complex. GrpE releases ADP from DnaK; ATP binding to DnaK triggers the release of the substrate protein, thus completing the reaction cycle. Several rounds of ATP-dependent interactions between DnaJ, DnaK and GrpE are required for fully efficient folding. Also involved, together with DnaK and GrpE, in the DNA replication of plasmids through activation of initiation proteins. The polypeptide is Chaperone protein DnaJ (Wolinella succinogenes (strain ATCC 29543 / DSM 1740 / CCUG 13145 / JCM 31913 / LMG 7466 / NCTC 11488 / FDC 602W) (Vibrio succinogenes)).